Reading from the N-terminus, the 721-residue chain is Polyphosphate kinase (721 aa).

Position 54 (asparagine 54) interacts with ATP. Positions 379 and 409 each coordinate Mg(2+). The PLD phosphodiesterase domain maps to 434-468; that stretch reads THLKTHSKIALVVKRIGGELTSFVHLGTGNYNDKT. The active-site Phosphohistidine intermediate is histidine 439. ATP contacts are provided by tyrosine 472, arginine 568, and histidine 596.

It belongs to the polyphosphate kinase 1 (PPK1) family. Requires Mg(2+) as cofactor. An intermediate of this reaction is the autophosphorylated ppk in which a phosphate is covalently linked to a histidine residue through a N-P bond.

The catalysed reaction is [phosphate](n) + ATP = [phosphate](n+1) + ADP. Its function is as follows. Catalyzes the reversible transfer of the terminal phosphate of ATP to form a long-chain polyphosphate (polyP). In Staphylococcus haemolyticus (strain JCSC1435), this protein is Polyphosphate kinase.